An 86-amino-acid chain; its full sequence is EMBRYO SURROUNDING FACTOR 1-like protein 2 (86 aa).

The signal sequence occupies residues 1–21 (MKSHIAIICIIMLSFFSMHEY). Cystine bridges form between Cys-39–Cys-54, Cys-44–Cys-82, Cys-52–Cys-78, and Cys-55–Cys-65.

This sequence belongs to the MEG family.

The chain is EMBRYO SURROUNDING FACTOR 1-like protein 2 (ESFL2) from Arabidopsis thaliana (Mouse-ear cress).